The chain runs to 108 residues: ADM5 (108 aa).

A signal peptide spans 1–18 (MTAHILLLWLFASSILGD). The propeptide occupies 19-25 (PDSAGRL). An intrachain disulfide couples Cys38 to Cys43. The tract at residues 61–108 (KELSGKAGRKPQDPYSYGRRRRRRRRRREARLLRRLQDPSLRRAQLAG) is disordered. Residue Tyr77 is modified to Tyrosine amide. Residues 78-89 (GRRRRRRRRRRE) are compositionally biased toward basic residues. The propeptide occupies 89–108 (EARLLRRLQDPSLRRAQLAG). Residues 90–101 (ARLLRRLQDPSL) are compositionally biased toward basic and acidic residues.

It belongs to the adrenomedullin family. As to expression, expressed abundantly in the spleen and thymus. Also expressed in adrenal and pituitary. Not expressed in brain, heart, kidney, liver and stomach.

Its subcellular location is the secreted. Seems to have a peripheral vasodepressor effect and a central vasopressor effect. The sequence is that of ADM5 (ADM5) from Sus scrofa (Pig).